Reading from the N-terminus, the 262-residue chain is KTSTRTRCAFEVAARDQGAGVTYLESSASQIGHKESIKDTARVLGRMYDAIEYRGFGQETVEELAKYAGVPVFNGLTNEFHPTQMLADALTMREHGGKPLNQTSFAYVGDARYNMGNSLLILGAKLGMDVRIGAPEGLWPSEGIIAAANAVAEETGAKITLTANPQEAVKGVGFIHTDVWVSMGEPKEIWQERIDLLKDYRVTSELMAASGNPQVKFMHCLPAFHNRETKIGEWIYETFGLNGVEVTEEVFESPAGIVFDQA.

Carbamoyl phosphate contacts are provided by residues 3 to 7 (STRTR), Q30, R54, and 81 to 84 (HPTQ). L-ornithine is bound by residues N114, D178, and 182–183 (SM). Carbamoyl phosphate-binding positions include 219-222 (HCLP) and T247.

This sequence belongs to the aspartate/ornithine carbamoyltransferase superfamily. OTCase family.

The protein resides in the cytoplasm. It catalyses the reaction carbamoyl phosphate + L-ornithine = L-citrulline + phosphate + H(+). It participates in amino-acid biosynthesis; L-arginine biosynthesis; L-arginine from L-ornithine and carbamoyl phosphate: step 1/3. Functionally, reversibly catalyzes the transfer of the carbamoyl group from carbamoyl phosphate (CP) to the N(epsilon) atom of ornithine (ORN) to produce L-citrulline. The polypeptide is Ornithine carbamoyltransferase (argF) (Neisseria lactamica).